The primary structure comprises 176 residues: Ribosome maturation factor RimM (176 aa).

Positions 97–176 (EDDFYWRDLI…QICVDWDPGF (80 aa)) constitute a PRC barrel domain.

The protein belongs to the RimM family. In terms of assembly, binds ribosomal protein uS19.

It is found in the cytoplasm. Its function is as follows. An accessory protein needed during the final step in the assembly of 30S ribosomal subunit, possibly for assembly of the head region. Essential for efficient processing of 16S rRNA. May be needed both before and after RbfA during the maturation of 16S rRNA. It has affinity for free ribosomal 30S subunits but not for 70S ribosomes. The chain is Ribosome maturation factor RimM from Colwellia psychrerythraea (strain 34H / ATCC BAA-681) (Vibrio psychroerythus).